A 223-amino-acid polypeptide reads, in one-letter code: MIF4G domain-containing protein (223 aa).

Residues 9–206 (DYKIQGFDAD…LEMIEYRAAG (198 aa)) form the MIF4G domain.

The protein belongs to the MIF4GD family. As to quaternary structure, interacts with eif4g1, eif4g2 and slbp; probably tethered by SLBP to the 3'-end of mRNAs ending with the histone stem-loop, it also interacts with eif4g1 which is bound to their 5'-end.

It localises to the cytoplasm. The protein resides in the nucleus. In terms of biological role, functions in replication-dependent translation of histone mRNAs which differ from other eukaryotic mRNAs in that they do not end with a poly-A tail but a stem-loop. May participate in circularizing those mRNAs specifically enhancing their translation. This Xenopus tropicalis (Western clawed frog) protein is MIF4G domain-containing protein (mif4gd).